The following is a 185-amino-acid chain: HTH-type transcriptional regulator SAB2452 (185 aa).

Residues 6 to 66 (IENRQRIEEI…YVIQRDLNTF (61 aa)) enclose the HTH tetR-type domain. Residues 29–48 (SMNRIAKELGIGMGTLYRHF) constitute a DNA-binding region (H-T-H motif).

The polypeptide is HTH-type transcriptional regulator SAB2452 (Staphylococcus aureus (strain bovine RF122 / ET3-1)).